A 210-amino-acid chain; its full sequence is Potassium-transporting ATPase KdpC subunit (210 aa).

The chain crosses the membrane as a helical span at residues 13–33 (LVTLVLLLVCGLAYPLILTGI).

The protein belongs to the KdpC family. As to quaternary structure, the system is composed of three essential subunits: KdpA, KdpB and KdpC.

It localises to the cell membrane. In terms of biological role, part of the high-affinity ATP-driven potassium transport (or Kdp) system, which catalyzes the hydrolysis of ATP coupled with the electrogenic transport of potassium into the cytoplasm. This subunit acts as a catalytic chaperone that increases the ATP-binding affinity of the ATP-hydrolyzing subunit KdpB by the formation of a transient KdpB/KdpC/ATP ternary complex. This Clostridium kluyveri (strain ATCC 8527 / DSM 555 / NBRC 12016 / NCIMB 10680 / K1) protein is Potassium-transporting ATPase KdpC subunit.